The primary structure comprises 216 residues: ATP phosphoribosyltransferase (216 aa).

Belongs to the ATP phosphoribosyltransferase family. Short subfamily. In terms of assembly, heteromultimer composed of HisG and HisZ subunits.

The protein localises to the cytoplasm. The enzyme catalyses 1-(5-phospho-beta-D-ribosyl)-ATP + diphosphate = 5-phospho-alpha-D-ribose 1-diphosphate + ATP. It functions in the pathway amino-acid biosynthesis; L-histidine biosynthesis; L-histidine from 5-phospho-alpha-D-ribose 1-diphosphate: step 1/9. Functionally, catalyzes the condensation of ATP and 5-phosphoribose 1-diphosphate to form N'-(5'-phosphoribosyl)-ATP (PR-ATP). Has a crucial role in the pathway because the rate of histidine biosynthesis seems to be controlled primarily by regulation of HisG enzymatic activity. The chain is ATP phosphoribosyltransferase from Rubrobacter xylanophilus (strain DSM 9941 / JCM 11954 / NBRC 16129 / PRD-1).